Consider the following 133-residue polypeptide: MIKKVVAYAAIAASVMGASAAAAPQAMAIGDDSGPVSANGNGASQYFGNSMTTGNMSPQMALIQGSFNKPCIAVSDIPVSVIGLVPIQDLNVLGDDMNQQCAENSTQAKRDGALAHLLEDVSILSSNGEGGKG.

The N-terminal stretch at methionine 1–alanine 28 is a signal peptide. Amyloid-forming stretches follow at residues glutamine 45–serine 57 and glutamine 59–proline 70. The required for amyloid formation stretch occupies residues glutamine 45–proline 70.

The protein belongs to the rodlin family.

The protein localises to the secreted. The protein resides in the cell wall. It is found in the spore wall. Its function is as follows. Forms part of the rodlet layer on the spore surface; despite their high similarity both RdlA and RdlB are required for rodlet formation. Plays a role in cell adhesion to polystyrene plates. Forms amyloid-like fibrils in vitro composed of stacked beta-sheets. The sequence is that of Rodlin protein RdlB from Streptomyces coelicolor (strain ATCC BAA-471 / A3(2) / M145).